An 899-amino-acid polypeptide reads, in one-letter code: Translation initiation factor IF-2 (899 aa).

Disordered stretches follow at residues 116–135, 170–189, and 262–306; these read AKAR…ARLQ, RGGG…EQKK, and DREI…ANKH. The region spanning 399-568 is the tr-type G domain; sequence TRPPVVTIMG…LIQSELMELK (170 aa). Positions 408–415 are G1; sequence GHVDHGKT. Residue 408 to 415 coordinates GTP; the sequence is GHVDHGKT. The G2 stretch occupies residues 433–437; it reads GITQH. The interval 454-457 is G3; it reads DTPG. GTP contacts are provided by residues 454 to 458 and 508 to 511; these read DTPGH and NKMD. The segment at 508-511 is G4; that stretch reads NKMD. A G5 region spans residues 544–546; it reads SAH.

The protein belongs to the TRAFAC class translation factor GTPase superfamily. Classic translation factor GTPase family. IF-2 subfamily.

It is found in the cytoplasm. Functionally, one of the essential components for the initiation of protein synthesis. Protects formylmethionyl-tRNA from spontaneous hydrolysis and promotes its binding to the 30S ribosomal subunits. Also involved in the hydrolysis of GTP during the formation of the 70S ribosomal complex. In Acinetobacter baumannii (strain AB307-0294), this protein is Translation initiation factor IF-2.